The primary structure comprises 438 residues: tRNA modification GTPase MnmE (438 aa).

Residues Arg19, Glu76, and Lys115 each contribute to the (6S)-5-formyl-5,6,7,8-tetrahydrofolate site. The 153-residue stretch at 211–363 folds into the TrmE-type G domain; it reads GYKVAIIGRP…LSKELESYLN (153 aa). GTP-binding positions include 221 to 226, 240 to 246, and 265 to 268; these read NVGKSS, SETAGTT, and DTAG. Residues Ser225 and Thr246 each contribute to the Mg(2+) site. Lys438 is a binding site for (6S)-5-formyl-5,6,7,8-tetrahydrofolate.

It belongs to the TRAFAC class TrmE-Era-EngA-EngB-Septin-like GTPase superfamily. TrmE GTPase family. As to quaternary structure, homodimer. Heterotetramer of two MnmE and two MnmG subunits. It depends on K(+) as a cofactor.

The protein localises to the cytoplasm. Its function is as follows. Exhibits a very high intrinsic GTPase hydrolysis rate. Involved in the addition of a carboxymethylaminomethyl (cmnm) group at the wobble position (U34) of certain tRNAs, forming tRNA-cmnm(5)s(2)U34. The chain is tRNA modification GTPase MnmE from Campylobacter fetus subsp. fetus (strain 82-40).